Here is a 113-residue protein sequence, read N- to C-terminus: Hydrogenase maturation factor HypA (113 aa).

H2 lines the Ni(2+) pocket. Zn(2+)-binding residues include C73, C76, C89, and C92.

It belongs to the HypA/HybF family.

Functionally, involved in the maturation of [NiFe] hydrogenases. Required for nickel insertion into the metal center of the hydrogenase. In Methylocella silvestris (strain DSM 15510 / CIP 108128 / LMG 27833 / NCIMB 13906 / BL2), this protein is Hydrogenase maturation factor HypA.